Here is a 97-residue protein sequence, read N- to C-terminus: Large ribosomal subunit protein uL23 (97 aa).

Belongs to the universal ribosomal protein uL23 family. Part of the 50S ribosomal subunit. Contacts protein L29, and trigger factor when it is bound to the ribosome.

Functionally, one of the early assembly proteins it binds 23S rRNA. One of the proteins that surrounds the polypeptide exit tunnel on the outside of the ribosome. Forms the main docking site for trigger factor binding to the ribosome. In Pelagibacter ubique (strain HTCC1062), this protein is Large ribosomal subunit protein uL23.